The primary structure comprises 157 residues: Small ribosomal subunit protein uS7 (157 aa).

Belongs to the universal ribosomal protein uS7 family. Part of the 30S ribosomal subunit. Contacts proteins S9 and S11.

In terms of biological role, one of the primary rRNA binding proteins, it binds directly to 16S rRNA where it nucleates assembly of the head domain of the 30S subunit. Is located at the subunit interface close to the decoding center, probably blocks exit of the E-site tRNA. The chain is Small ribosomal subunit protein uS7 from Herpetosiphon aurantiacus (strain ATCC 23779 / DSM 785 / 114-95).